We begin with the raw amino-acid sequence, 373 residues long: CXADR-like membrane protein (373 aa).

The N-terminal stretch at 1–18 is a signal peptide; it reads MSLLLLLLLVSYYVGTLG. Ig-like C2-type domains follow at residues 19 to 127 and 135 to 224; these read THTE…VILK and PKCE…VRVT. At 19 to 235 the chain is on the extracellular side; the sequence is THTEIKRVAE…QYVQSIGMVA (217 aa). 2 disulfide bridges follow: C35-C111 and C153-C208. 2 N-linked (GlcNAc...) asparagine glycosylation sites follow: N74 and N197. The helical transmembrane segment at 236–256 threads the bilayer; the sequence is GAVTGIVAGALLIFLLVWLLI. At 257 to 373 the chain is on the cytoplasmic side; that stretch reads RRKDKERYEE…PSQSRAFQTV (117 aa). A compositionally biased stretch (basic and acidic residues) spans 264 to 281; sequence YEEEERPNEIREDAEAPK. Residues 264–373 are disordered; the sequence is YEEEERPNEI…PSQSRAFQTV (110 aa). A compositionally biased stretch (low complexity) spans 288-314; it reads SSSSSGSRSSRSGSSSTRSTANSASRS. Polar residues predominate over residues 355-373; that stretch reads KAETTPSMIPSQSRAFQTV.

As to expression, predominantly expressed in epithelial cells within different tissues and in the white adipose tissue. Expressed at high levels in small intestine and placenta, at intermediate levels in the heart, skeletal muscle, colon, spleen, kidney and lung and at low levels in the liver and peripheral blood leukocytes. Highly abundant in the intestine during embryo and fetal development (at protein level).

The protein resides in the cell junction. Its subcellular location is the tight junction. The protein localises to the cell membrane. In terms of biological role, may be involved in the cell-cell adhesion. May play a role in adipocyte differentiation and development of obesity. Is required for normal small intestine development. The protein is CXADR-like membrane protein (CLMP) of Homo sapiens (Human).